Here is a 266-residue protein sequence, read N- to C-terminus: Phosphate import ATP-binding protein PstB 1 (266 aa).

Residues 21–261 form the ABC transporter domain; that stretch reads ISTQDLSVFY…PKGEITEDYI (241 aa). 54-61 serves as a coordination point for ATP; the sequence is GGSGSGKS.

It belongs to the ABC transporter superfamily. Phosphate importer (TC 3.A.1.7) family. The complex is composed of two ATP-binding proteins (PstB), two transmembrane proteins (PstC and PstA) and a solute-binding protein (PstS).

It localises to the cell membrane. It carries out the reaction phosphate(out) + ATP + H2O = ADP + 2 phosphate(in) + H(+). Part of the ABC transporter complex PstSACB involved in phosphate import. Responsible for energy coupling to the transport system. The chain is Phosphate import ATP-binding protein PstB 1 from Lactobacillus johnsonii (strain CNCM I-12250 / La1 / NCC 533).